We begin with the raw amino-acid sequence, 694 residues long: Prolyl 3-hydroxylase 2 (694 aa).

Residues 1 to 23 form the signal peptide; sequence MAPGSRSWGAVLLLAAMLPAACG. 4 TPR repeats span residues 35–68, 136–169, 196–229, and 292–325; these read FDALYASGVEAYYGGDFAGAARCLEQALRSRREL, RVPYSYLQRAYIQLNKLEEAANAAHTFFMANPEH, HMEDYSAGVRHYDKEEYGLAITFLERALEGYYAE, and PLHYDYLQFAYYRVGDYVKALECARSYLLFHPDD. The stretch at 386-418 forms a coiled coil; it reads KRYGARQDEHSVPSSISSEPEDGPRLSLTKKPT. Residues 395-427 form a disordered region; the sequence is HSVPSSISSEPEDGPRLSLTKKPTPKPDRELKE. Asn446 and Asn535 each carry an N-linked (GlcNAc...) asparagine glycan. Positions 543–657 constitute a Fe2OG dioxygenase domain; it reads THLVCRTALS…RCAVALWFTL (115 aa). 3 residues coordinate Fe cation: His566, Asp568, and His638. The active site involves Arg648. A Prevents secretion from ER motif is present at residues 691-694; sequence KDEL.

Belongs to the leprecan family. It depends on Fe cation as a cofactor. The cofactor is L-ascorbate.

It localises to the endoplasmic reticulum. Its subcellular location is the sarcoplasmic reticulum. The protein resides in the golgi apparatus. It carries out the reaction L-prolyl-[collagen] + 2-oxoglutarate + O2 = trans-3-hydroxy-L-prolyl-[collagen] + succinate + CO2. Its function is as follows. Prolyl 3-hydroxylase that catalyzes the post-translational formation of 3-hydroxyproline on collagens. Contributes to proline 3-hydroxylation of collagen COL4A1 and COL1A1 in tendons, the eye sclera and in the eye lens capsule. Has high activity with the type IV collagen COL4A1, and lower activity with COL1A1. Catalyzes hydroxylation of the first Pro in Gly-Pro-Hyp sequences where Hyp is 4-hydroxyproline. Has no activity on substrates that lack 4-hydroxyproline in the third position. The polypeptide is Prolyl 3-hydroxylase 2 (Gallus gallus (Chicken)).